Consider the following 200-residue polypeptide: Probable GTP-binding protein EngB (200 aa).

The 175-residue stretch at 26–200 (SIPEIAIAGR…IYEIAQCIKK (175 aa)) folds into the EngB-type G domain. Residues 34–41 (GRSNVGKS), 61–65 (GCTKQ), 80–83 (DLPG), 147–150 (TKID), and 176–179 (VISA) each bind GTP. Mg(2+) contacts are provided by serine 41 and threonine 63.

It belongs to the TRAFAC class TrmE-Era-EngA-EngB-Septin-like GTPase superfamily. EngB GTPase family. Mg(2+) serves as cofactor.

In terms of biological role, necessary for normal cell division and for the maintenance of normal septation. This Ehrlichia canis (strain Jake) protein is Probable GTP-binding protein EngB.